A 362-amino-acid chain; its full sequence is Formate dehydrogenase (362 aa).

Positions 93 and 119 each coordinate substrate. NAD(+)-binding positions include 174 to 175 (RI), Asp-195, 230 to 234 (PLHAG), Thr-256, Asp-282, 311 to 314 (HYSG), and Ser-357.

It belongs to the D-isomer specific 2-hydroxyacid dehydrogenase family. FDH subfamily. Homodimer.

It is found in the cytoplasm. It catalyses the reaction formate + NAD(+) = CO2 + NADH. Its function is as follows. Catalyzes the NAD(+)-dependent oxidation of formate to carbon dioxide. Formate oxidation is the final step in the methanol oxidation pathway in methylotrophic microorganisms. Has a role in the detoxification of exogenous formate in non-methylotrophic organisms. This Pichia angusta (Yeast) protein is Formate dehydrogenase.